The chain runs to 365 residues: 5-hydroxytryptamine receptor 1E (365 aa).

Residues 1 to 21 (MNITNCTTEASMAIRPKTITE) are Extracellular-facing. Asparagine 2 and asparagine 5 each carry an N-linked (GlcNAc...) asparagine glycan. The chain crosses the membrane as a helical span at residues 22-45 (KMLICMTLVVITTLTTLLNLAVIM). Residues 46 to 59 (AIGTTKKLHQPANY) lie on the Cytoplasmic side of the membrane. Residues 60–84 (LICSLAVTDLLVAVLVMPLSIIYIV) form a helical membrane-spanning segment. The Extracellular segment spans residues 85 to 92 (MDRWKLGY). A helical transmembrane segment spans residues 93–118 (FLCEVWLSVDMTCCTCSILHLCVIAL). Cysteines 95 and 173 form a disulfide. Serotonin-binding residues include aspartate 102 and cysteine 106. The short motif at 119 to 121 (DRY) is the DRY motif; important for ligand-induced conformation changes element. The Cytoplasmic portion of the chain corresponds to 119-138 (DRYWAITNAIEYARKRTAKR). The chain crosses the membrane as a helical span at residues 139 to 157 (AALMILTVWTISIFISMPP). Residues 158-179 (LFWRSHRRLSPPPSQCTIQHDH) lie on the Extracellular side of the membrane. A helical transmembrane segment spans residues 180–203 (VIYTIYSTLGAFYIPLTLILILYY). The Cytoplasmic segment spans residues 204 to 291 (RIYHAAKSLY…SSTRERKAAR (88 aa)). The helical transmembrane segment at 292-316 (ILGLILGAFILSWLPFFIKELIVGL) threads the bilayer. The Extracellular portion of the chain corresponds to 317–322 (SIYTVS). The chain crosses the membrane as a helical span at residues 323 to 345 (SEVADFLTWLGYVNSLINPLLYT). Positions 340–344 (NPLLY) match the NPxxY motif; important for ligand-induced conformation changes and signaling motif. Residues 346–365 (SFNEDFKLAFKKLIRCREHT) lie on the Cytoplasmic side of the membrane.

The protein belongs to the G-protein coupled receptor 1 family. In terms of tissue distribution, detected in brain.

It is found in the cell membrane. Its function is as follows. G-protein coupled receptor for 5-hydroxytryptamine (serotonin). Also functions as a receptor for various alkaloids and psychoactive substances. Ligand binding causes a conformation change that triggers signaling via guanine nucleotide-binding proteins (G proteins) and modulates the activity of downstream effectors, such as adenylate cyclase. HTR1E is coupled to G(i)/G(o) G alpha proteins and mediates inhibitory neurotransmission by inhibiting adenylate cyclase activity. The polypeptide is 5-hydroxytryptamine receptor 1E (Homo sapiens (Human)).